We begin with the raw amino-acid sequence, 500 residues long: L-arabinose isomerase (500 aa).

Mn(2+) contacts are provided by E306, E333, H349, and H448.

It belongs to the arabinose isomerase family. The cofactor is Mn(2+).

It carries out the reaction beta-L-arabinopyranose = L-ribulose. It participates in carbohydrate degradation; L-arabinose degradation via L-ribulose; D-xylulose 5-phosphate from L-arabinose (bacterial route): step 1/3. Catalyzes the conversion of L-arabinose to L-ribulose. This chain is L-arabinose isomerase, found in Cellvibrio japonicus (strain Ueda107) (Pseudomonas fluorescens subsp. cellulosa).